Here is a 387-residue protein sequence, read N- to C-terminus: Galactokinase (387 aa).

Residue 33–36 (EHID) coordinates substrate. Residues serine 67 and 124–130 (GAGLSSS) contribute to the ATP site. Mg(2+)-binding residues include serine 130 and glutamate 162. Aspartate 174 functions as the Proton acceptor in the catalytic mechanism. Position 224 (tyrosine 224) interacts with substrate.

The protein belongs to the GHMP kinase family. GalK subfamily.

It localises to the cytoplasm. It carries out the reaction alpha-D-galactose + ATP = alpha-D-galactose 1-phosphate + ADP + H(+). The protein operates within carbohydrate metabolism; galactose metabolism. In terms of biological role, catalyzes the transfer of the gamma-phosphate of ATP to D-galactose to form alpha-D-galactose-1-phosphate (Gal-1-P). The sequence is that of Galactokinase from Clostridium perfringens (strain ATCC 13124 / DSM 756 / JCM 1290 / NCIMB 6125 / NCTC 8237 / Type A).